A 275-amino-acid polypeptide reads, in one-letter code: Formamidopyrimidine-DNA glycosylase (275 aa).

Residue proline 2 is the Schiff-base intermediate with DNA of the active site. Glutamate 3 acts as the Proton donor in catalysis. The Proton donor; for beta-elimination activity role is filled by lysine 59. Histidine 94 and arginine 113 together coordinate DNA. The FPG-type zinc-finger motif lies at 241–275 (LVHTHAKEPCQICGTIIQKTKVNGRGTYYCPNCQN). Arginine 265 acts as the Proton donor; for delta-elimination activity in catalysis.

Belongs to the FPG family. Monomer. Zn(2+) serves as cofactor.

The enzyme catalyses Hydrolysis of DNA containing ring-opened 7-methylguanine residues, releasing 2,6-diamino-4-hydroxy-5-(N-methyl)formamidopyrimidine.. It catalyses the reaction 2'-deoxyribonucleotide-(2'-deoxyribose 5'-phosphate)-2'-deoxyribonucleotide-DNA = a 3'-end 2'-deoxyribonucleotide-(2,3-dehydro-2,3-deoxyribose 5'-phosphate)-DNA + a 5'-end 5'-phospho-2'-deoxyribonucleoside-DNA + H(+). Involved in base excision repair of DNA damaged by oxidation or by mutagenic agents. Acts as a DNA glycosylase that recognizes and removes damaged bases. Has a preference for oxidized purines, such as 7,8-dihydro-8-oxoguanine (8-oxoG). Has AP (apurinic/apyrimidinic) lyase activity and introduces nicks in the DNA strand. Cleaves the DNA backbone by beta-delta elimination to generate a single-strand break at the site of the removed base with both 3'- and 5'-phosphates. This is Formamidopyrimidine-DNA glycosylase from Ureaplasma parvum serovar 3 (strain ATCC 700970).